Here is a 318-residue protein sequence, read N- to C-terminus: Electron transfer flavoprotein subunit alpha (318 aa).

An FAD-binding site is contributed by 257 to 285; that stretch reads LYIALGISGAIQHRAGMQTSKTIVAVNKD.

This sequence belongs to the ETF alpha-subunit/FixB family. Heterodimer of an alpha and a beta subunit. The cofactor is FAD.

In terms of biological role, the electron transfer flavoprotein serves as a specific electron acceptor for other dehydrogenases. It transfers the electrons to the main respiratory chain via ETF-ubiquinone oxidoreductase (ETF dehydrogenase). The sequence is that of Electron transfer flavoprotein subunit alpha (etfA) from Mycobacterium leprae (strain TN).